A 309-amino-acid chain; its full sequence is Tagatose-6-phosphate kinase (309 aa).

It belongs to the carbohydrate kinase PfkB family. LacC subfamily.

The catalysed reaction is D-tagatofuranose 6-phosphate + ATP = D-tagatofuranose 1,6-bisphosphate + ADP + H(+). Its pathway is carbohydrate metabolism; D-tagatose 6-phosphate degradation; D-glyceraldehyde 3-phosphate and glycerone phosphate from D-tagatose 6-phosphate: step 1/2. The chain is Tagatose-6-phosphate kinase from Streptococcus pneumoniae serotype 4 (strain ATCC BAA-334 / TIGR4).